The primary structure comprises 350 residues: Hydroxymethylglutaryl-CoA synthase (350 aa).

Glu-83 functions as the Proton donor/acceptor in the catalytic mechanism. Cys-115 functions as the Acyl-thioester intermediate in the catalytic mechanism. (3S)-3-hydroxy-3-methylglutaryl-CoA is bound by residues Cys-115 and Thr-156. Arg-204 is a binding site for CoA. 2 residues coordinate (3S)-3-hydroxy-3-methylglutaryl-CoA: Thr-206 and His-239. His-239 functions as the Proton donor/acceptor in the catalytic mechanism. CoA is bound at residue Lys-244. (3S)-3-hydroxy-3-methylglutaryl-CoA is bound by residues Asn-271 and Ser-301.

The protein belongs to the thiolase-like superfamily. Archaeal HMG-CoA synthase family. Interacts with acetoacetyl-CoA thiolase that catalyzes the precedent step in the pathway and with a DUF35 protein. The acetoacetyl-CoA thiolase/HMG-CoA synthase complex channels the intermediate via a fused CoA-binding site, which allows for efficient coupling of the endergonic thiolase reaction with the exergonic HMGCS reaction.

It carries out the reaction acetoacetyl-CoA + acetyl-CoA + H2O = (3S)-3-hydroxy-3-methylglutaryl-CoA + CoA + H(+). It participates in metabolic intermediate biosynthesis; (R)-mevalonate biosynthesis; (R)-mevalonate from acetyl-CoA: step 2/3. Its function is as follows. Catalyzes the condensation of acetyl-CoA with acetoacetyl-CoA to form 3-hydroxy-3-methylglutaryl-CoA (HMG-CoA). Functions in the mevalonate (MVA) pathway leading to isopentenyl diphosphate (IPP), a key precursor for the biosynthesis of isoprenoid compounds that are building blocks of archaeal membrane lipids. This chain is Hydroxymethylglutaryl-CoA synthase, found in Thermococcus kodakarensis (strain ATCC BAA-918 / JCM 12380 / KOD1) (Pyrococcus kodakaraensis (strain KOD1)).